The chain runs to 250 residues: Undecaprenyl-diphosphatase (250 aa).

Helical transmembrane passes span 35 to 55, 73 to 93, 100 to 120, 146 to 166, 171 to 191, 200 to 220, and 229 to 249; these read DLSVFALLHLATLAAIVIFVG, INLTLKIIVSTIPAAIFGVLL, SLSNLKIISFFFLVTSAALLI, ALAIFPGISRSGFTLFGSLLI, EIALKYSFLVSIPVILGAGLL, SYSISSAIVAFFFGLLSLFIL, and LKIFSAYCIFISIFSFVLGGI.

It belongs to the UppP family.

The protein localises to the cell inner membrane. The enzyme catalyses di-trans,octa-cis-undecaprenyl diphosphate + H2O = di-trans,octa-cis-undecaprenyl phosphate + phosphate + H(+). Its function is as follows. Catalyzes the dephosphorylation of undecaprenyl diphosphate (UPP). Confers resistance to bacitracin. The protein is Undecaprenyl-diphosphatase of Thermosipho melanesiensis (strain DSM 12029 / CIP 104789 / BI429).